A 185-amino-acid chain; its full sequence is uncharacterized protein (185 aa).

This is an uncharacterized protein from Haemophilus influenzae (strain ATCC 51907 / DSM 11121 / KW20 / Rd).